The following is a 138-amino-acid chain: Acidic phospholipase A2 Ts-A1 (138 aa).

The N-terminal stretch at 1 to 16 (MRTLWIMAVLQVGVEG) is a signal peptide. Cystine bridges form between C42–C131, C44–C60, C59–C111, C65–C138, C66–C104, C73–C97, and C91–C102. Ca(2+)-binding residues include F43, G45, and G47. H63 is a catalytic residue. D64 is a binding site for Ca(2+). D105 is a catalytic residue.

Ca(2+) is required as a cofactor. Expressed by the venom gland.

It localises to the secreted. The enzyme catalyses a 1,2-diacyl-sn-glycero-3-phosphocholine + H2O = a 1-acyl-sn-glycero-3-phosphocholine + a fatty acid + H(+). Its function is as follows. Snake venom phospholipase A2 (PLA2) that shows a moderate inhibition of ADP-induced human platelet aggregation when tested on platelet rich plasma. Exhibits high hydrolytic activities and prefers the anionic micelles (dPPC with deoxycholate) to the zwitterionic micelles (dPPC with Triton X-100). PLA2 catalyzes the calcium-dependent hydrolysis of the 2-acyl groups in 3-sn-phosphoglycerides. The polypeptide is Acidic phospholipase A2 Ts-A1 (Trimeresurus stejnegeri (Chinese green tree viper)).